The primary structure comprises 314 residues: Probable cell division protein WhiA (314 aa).

The segment at residues 274 to 305 (SLAELGDRLEISKSGANHRMRKLKALEDMINA) is a DNA-binding region (H-T-H motif).

The protein belongs to the WhiA family.

Functionally, involved in cell division and chromosome segregation. This chain is Probable cell division protein WhiA, found in Leuconostoc citreum (strain KM20).